The sequence spans 90 residues: Small ribosomal subunit protein uS15 (90 aa).

Belongs to the universal ribosomal protein uS15 family. As to quaternary structure, part of the 30S ribosomal subunit. Forms a bridge to the 50S subunit in the 70S ribosome, contacting the 23S rRNA.

Its function is as follows. One of the primary rRNA binding proteins, it binds directly to 16S rRNA where it helps nucleate assembly of the platform of the 30S subunit by binding and bridging several RNA helices of the 16S rRNA. Forms an intersubunit bridge (bridge B4) with the 23S rRNA of the 50S subunit in the ribosome. This is Small ribosomal subunit protein uS15 from Campylobacter concisus (strain 13826).